A 197-amino-acid chain; its full sequence is Neurturin (197 aa).

The N-terminal stretch at 1-19 (MQRWKAAALASVLCSSVLS) is a signal peptide. A propeptide spanning residues 20–95 (IWMCREGLLL…RAGPRRRRAR (76 aa)) is cleaved from the precursor. Residues 74–93 (TPWAGRPPGPRRRAGPRRRR) form a disordered region. Positions 82–93 (GPRRRAGPRRRR) are enriched in basic residues. Intrachain disulfides connect C103/C165, C130/C194, and C134/C196. Residues R149, R158, R160, and Q162 each contribute to the heparan sulfate group site.

This sequence belongs to the TGF-beta family. GDNF subfamily. In terms of assembly, homodimer; disulfide-linked. Interacts with GFRA2 coreceptor and RET: forms a 2:2:2 ternary complex composed of NRTN ligand, GFRA2 and RET receptor. Also forms a 4:4:4 tetrameric complex composed of 4 copies of NRTN ligand, GFRA2 and RET receptor, which prevents endocytosis of RET.

Its subcellular location is the secreted. Growth factor that supports the survival of sympathetic neurons in culture. May regulate the development and maintenance of the CNS. Involved in the development of the neural crest. Might control the size of non-neuronal cell population such as haemopoietic cells. Acts by binding to its coreceptor, GFRA2, leading to autophosphorylation and activation of the RET receptor. Heparan sulfate-binding is required for signaling. This Homo sapiens (Human) protein is Neurturin.